A 283-amino-acid chain; its full sequence is Putative replication protein XF_b0001 (283 aa).

This chain is Putative replication protein XF_b0001, found in Xylella fastidiosa (strain 9a5c).